A 261-amino-acid polypeptide reads, in one-letter code: CD40 ligand (261 aa).

Over 1–22 (MIETYNQPVPRSAATGPPVSMK) the chain is Cytoplasmic. A helical; Signal-anchor for type II membrane protein membrane pass occupies residues 23-43 (IFMYLLTVFLITQMIGSALFA). At 44-261 (VYLHRRLDKI…GFTSFGLLKL (218 aa)) the chain is on the extracellular side. Positions 122 to 261 (IAAHVISEAS…GFTSFGLLKL (140 aa)) constitute a THD domain. Cysteines 178 and 218 form a disulfide. The N-linked (GlcNAc...) asparagine glycan is linked to N240.

It belongs to the tumor necrosis factor family. Homotrimer. Interacts with CD28. CD40 ligand, soluble form: Exists as either a monomer or a homotrimer. Forms a ternary complex between CD40 and integrins for CD40-CD40LG signaling. Post-translationally, the soluble form derives from the membrane form by proteolytic processing.

It is found in the cell membrane. Its subcellular location is the cell surface. The protein resides in the secreted. Cytokine that acts as a ligand to CD40/TNFRSF5. Costimulates T-cell proliferation and cytokine production. Its cross-linking on T-cells generates a costimulatory signal which enhances the production of IL4 and IL10 in conjunction with the TCR/CD3 ligation and CD28 costimulation. Induces the activation of NF-kappa-B. Induces the activation of kinases MAPK8 and PAK2 in T-cells. Mediates B-cell proliferation in the absence of co-stimulus as well as IgE production in the presence of IL4. Involved in immunoglobulin class switching. Its function is as follows. Acts as a ligand for integrins, specifically ITGA5:ITGB1 and ITGAV:ITGB3; both integrins and the CD40 receptor are required for activation of CD40-CD40LG signaling, which have cell-type dependent effects, such as B-cell activation, NF-kappa-B signaling and anti-apoptotic signaling. The protein is CD40 ligand (CD40LG) of Callithrix jacchus (White-tufted-ear marmoset).